A 152-amino-acid polypeptide reads, in one-letter code: Transcriptional repressor NrdR (152 aa).

Residues 3-34 (CCYCGHGESKVLETRSAEEGRVIRRRRECMEC) fold into a zinc finger. The region spanning 49 to 139 (LIVRKKGGSL…VYRQFTDVGR (91 aa)) is the ATP-cone domain.

The protein belongs to the NrdR family. The cofactor is Zn(2+).

Functionally, negatively regulates transcription of bacterial ribonucleotide reductase nrd genes and operons by binding to NrdR-boxes. This Heliobacterium modesticaldum (strain ATCC 51547 / Ice1) protein is Transcriptional repressor NrdR.